A 156-amino-acid chain; its full sequence is SsrA-binding protein (156 aa).

The protein belongs to the SmpB family.

It localises to the cytoplasm. Its function is as follows. Required for rescue of stalled ribosomes mediated by trans-translation. Binds to transfer-messenger RNA (tmRNA), required for stable association of tmRNA with ribosomes. tmRNA and SmpB together mimic tRNA shape, replacing the anticodon stem-loop with SmpB. tmRNA is encoded by the ssrA gene; the 2 termini fold to resemble tRNA(Ala) and it encodes a 'tag peptide', a short internal open reading frame. During trans-translation Ala-aminoacylated tmRNA acts like a tRNA, entering the A-site of stalled ribosomes, displacing the stalled mRNA. The ribosome then switches to translate the ORF on the tmRNA; the nascent peptide is terminated with the 'tag peptide' encoded by the tmRNA and targeted for degradation. The ribosome is freed to recommence translation, which seems to be the essential function of trans-translation. The sequence is that of SsrA-binding protein from Bacillus velezensis (strain DSM 23117 / BGSC 10A6 / LMG 26770 / FZB42) (Bacillus amyloliquefaciens subsp. plantarum).